We begin with the raw amino-acid sequence, 448 residues long: Gamma conglutin 2 (448 aa).

The N-terminal stretch at 1–33 is a signal peptide; it reads MAKNMAQIFPFIAVFLSCSFIFVLSSSQNSQSL. Residues 63 to 428 enclose the Peptidase A1 domain; it reads HWANIHKRTP…DLERSRVEFN (366 aa). Cystine bridges form between Cys-91-Cys-181, Cys-105-Cys-118, Cys-110-Cys-136, Cys-121-Cys-131, and Cys-349-Cys-390. Residue Asn-133 is glycosylated (N-linked (GlcNAc...) asparagine).

Belongs to the peptidase A1 family. Two-subunit monomeric unit made of alpha and beta subunits coupled by disulfide bonds (at pH 4.5 and under non-reducing conditions). Can also form oligomers including dimer, tetramer and cyclic hexamer (trimer of dimers) (at pH &gt; 5.5). Component of globulins complexes which accumulate in seeds. Interacts with flavonoids (e.g. apigenin glucosides) present in globulins complexes. Post-translationally, glycosylated on alpha chain. In terms of tissue distribution, expressed in developing seeds and in the young roots and cotyledons of germinating seeds and young seedlings.

The protein localises to the secreted. Its subcellular location is the extracellular space. Sulfur-rich seed storage protein that remains undegraded at germination. In Lupinus albus (White lupine), this protein is Gamma conglutin 2.